The primary structure comprises 462 residues: MSFRSIVRDFRDSFGTLSKRSFEVKISGFSGRHRGKSIGPSSELDDTPVVAQQSKWAGLPPELLRDVMKRLEEDDSNWPSRKDVVACASVCTTWRDMCKDIVRNPEFCGKLTFPVSLKQPGPRDGVIQCFIKRDKSKLTYHLYLCLSSAVLDETGKFLLSAKRSRRTTHTDYIISMDSKNISRSSSGYIGKLRSNFLGTKFIIYDTQPPYNARTLCSQERTSRRFSSRKVSPKVPTGCYPIVQVNYELNVLGTRGPRRMQCAMHSIPASAVEPGGIVPGQPKELLPRLFEESFRSMATSFSKYSITDHSTDFSSSRFSEFGGGALQGQEQEQDGDDVNKERPLVLRNKAPRWHEQLQCWCLNFRGRVTVASVKNFQLIAAAPQPSSGAASEPSQAGQAAQQQTQPSQPSSSSSSSSSNHDTVILQFGKVAKDMFTMDYRYPLSAFQAFAICLTSFDTKLACE.

Residues 54-109 enclose the F-box domain; that stretch reads SKWAGLPPELLRDVMKRLEEDDSNWPSRKDVVACASVCTTWRDMCKDIVRNPEFCG. 2 disordered regions span residues 317 to 338 and 383 to 418; these read FSEF…DDVN and QPSS…SSSN. Residues 383-417 are compositionally biased toward low complexity; it reads QPSSGAASEPSQAGQAAQQQTQPSQPSSSSSSSSS.

The protein belongs to the TUB family. As to expression, ubiquitous.

This is Tubby-like F-box protein 7 (TULP7) from Oryza sativa subsp. japonica (Rice).